Consider the following 269-residue polypeptide: 4-hydroxy-4-methyl-2-oxoglutarate aldolase cghB (269 aa).

Residue histidine 48 is the Proton acceptor of the active site. A divalent metal cation is bound by residues glutamate 155 and aspartate 181. Aspartate 181 contacts substrate.

Belongs to the HpcH/HpaI aldolase family. Homohexamer; trimer of dimers. Co(2+) serves as cofactor. The cofactor is Mn(2+). Zn(2+) is required as a cofactor. It depends on Fe(2+) as a cofactor. Requires Mg(2+) as cofactor.

It carries out the reaction 4-hydroxy-4-methyl-2-oxoglutarate = 2 pyruvate. Its pathway is secondary metabolite biosynthesis. Functionally, 4-hydroxy-4-methyl-2-oxoglutarate aldolase; part of the gene cluster that mediates the biosynthesis of the tetramic acid Sch210972, a potential anti-HIV fungal natural product that contains a decalin core. The PKS module of cghG together with the enoylreductase cghC catalyze the formation of the polyketide unit which is then conjugated to 4-hydroxyl-4-methyl glutamate (HMG) by the condensation domain of the cghG NRPS module. One unique structural feature of Sch210972 is the tetramic acid motif proposed to be derived from the non-proteinogenic amino acid HMG, by a Dieckmann-type condensation catalyzed by the reductase domain of cghG. The aldolase cghB catalyzes the aldol condensation of 2 molecules of pyruvic acid to yield the intermediate 4-hydroxyl-4-methyl-2-oxoglutarate (HMOG), which can then be stereoselectively transaminated by an unidentified enzyme to form HMG. The Diels-Alderase cghA then uses the Dieckmann product released by cghG as substrate and catalyzes the Diels-Alder cycloaddition to form the decalin ring of Sch210972. CghA also suppresses the nonenzymatic formation of the alternative stereoisomer. In Chaetomium globosum (strain ATCC 6205 / CBS 148.51 / DSM 1962 / NBRC 6347 / NRRL 1970) (Soil fungus), this protein is 4-hydroxy-4-methyl-2-oxoglutarate aldolase cghB.